The chain runs to 523 residues: Bifunctional purine biosynthesis protein PurH (523 aa).

Residues 1–152 enclose the MGS-like domain; sequence MSTDDGRRPI…KNHPSAAVVT (152 aa).

Belongs to the PurH family.

The enzyme catalyses (6R)-10-formyltetrahydrofolate + 5-amino-1-(5-phospho-beta-D-ribosyl)imidazole-4-carboxamide = 5-formamido-1-(5-phospho-D-ribosyl)imidazole-4-carboxamide + (6S)-5,6,7,8-tetrahydrofolate. It catalyses the reaction IMP + H2O = 5-formamido-1-(5-phospho-D-ribosyl)imidazole-4-carboxamide. The protein operates within purine metabolism; IMP biosynthesis via de novo pathway; 5-formamido-1-(5-phospho-D-ribosyl)imidazole-4-carboxamide from 5-amino-1-(5-phospho-D-ribosyl)imidazole-4-carboxamide (10-formyl THF route): step 1/1. It functions in the pathway purine metabolism; IMP biosynthesis via de novo pathway; IMP from 5-formamido-1-(5-phospho-D-ribosyl)imidazole-4-carboxamide: step 1/1. This chain is Bifunctional purine biosynthesis protein PurH, found in Mycobacterium bovis (strain BCG / Pasteur 1173P2).